The primary structure comprises 160 residues: Dihydrofolate reductase (160 aa).

Positions 1–160 (MLIAIWAMTQ…NVNYYRKKQQ (160 aa)) constitute a DHFR domain. 5-7 (IWA) provides a ligand contact to substrate. Residues 6-7 (WA) and 14-19 (IGNNNT) each bind NADP(+). Glutamate 27 contacts substrate. 43–46 (GRKT) is an NADP(+) binding site. Arginine 57 lines the substrate pocket. NADP(+) contacts are provided by residues 62 to 65 (LSKD) and 101 to 106 (CGGKSV). Residue serine 120 participates in substrate binding.

Belongs to the dihydrofolate reductase family.

It catalyses the reaction (6S)-5,6,7,8-tetrahydrofolate + NADP(+) = 7,8-dihydrofolate + NADPH + H(+). Its pathway is cofactor biosynthesis; tetrahydrofolate biosynthesis; 5,6,7,8-tetrahydrofolate from 7,8-dihydrofolate: step 1/1. Its function is as follows. Key enzyme in folate metabolism. Catalyzes an essential reaction for de novo glycine and purine synthesis, and for DNA precursor synthesis. In Mycoplasma genitalium (strain ATCC 33530 / DSM 19775 / NCTC 10195 / G37) (Mycoplasmoides genitalium), this protein is Dihydrofolate reductase (folA).